A 372-amino-acid chain; its full sequence is Lipid-A-disaccharide synthase (372 aa).

It belongs to the LpxB family.

It catalyses the reaction a lipid X + a UDP-2-N,3-O-bis[(3R)-3-hydroxyacyl]-alpha-D-glucosamine = a lipid A disaccharide + UDP + H(+). It participates in bacterial outer membrane biogenesis; LPS lipid A biosynthesis. In terms of biological role, condensation of UDP-2,3-diacylglucosamine and 2,3-diacylglucosamine-1-phosphate to form lipid A disaccharide, a precursor of lipid A, a phosphorylated glycolipid that anchors the lipopolysaccharide to the outer membrane of the cell. The chain is Lipid-A-disaccharide synthase from Thiobacillus denitrificans (strain ATCC 25259 / T1).